Consider the following 266-residue polypeptide: MSQASSGFTPAAQVQHGSSKGAFNSAYIPTEEEKRVFRECNSESFWYRSLPFSAIAVGITQVLVAKGMLSPSPRFGALPKIAFAGIFGYIGGKMSYVRVCQEKFMKLENSPLGEALRQGRLRHVSSEMNQPDFDPNSSESQQPGSESVQQPATEVSSATESYSSYTSDYTYSTPSQSYETTPFSSGFSDSGPANIRDDLPSQAPLYMEEDVPKRKPVLYEELRNKNRENYEVTLPQKNQTQMKPQMEVMQPKKEAKKNKYGDSWEE.

The region spanning 1-114 (MSQASSGFTP…MKLENSPLGE (114 aa)) is the OCIA domain. 2 disordered regions span residues 127–213 (EMNQ…DVPK) and 225–266 (KNRE…SWEE). Polar residues predominate over residues 135-155 (PNSSESQQPGSESVQQPATEV). Low complexity predominate over residues 156–178 (SSATESYSSYTSDYTYSTPSQSY). Residues 179 to 188 (ETTPFSSGFS) show a composition bias toward polar residues. The span at 250-266 (QPKKEAKKNKYGDSWEE) shows a compositional bias: basic and acidic residues.

The protein belongs to the OCIAD1 family.

It localises to the endosome. The sequence is that of OCIA domain-containing protein 1 (ociad1) from Danio rerio (Zebrafish).